The following is a 141-amino-acid chain: Large ribosomal subunit protein uL11 (141 aa).

It belongs to the universal ribosomal protein uL11 family. As to quaternary structure, part of the ribosomal stalk of the 50S ribosomal subunit. Interacts with L10 and the large rRNA to form the base of the stalk. L10 forms an elongated spine to which L12 dimers bind in a sequential fashion forming a multimeric L10(L12)X complex. One or more lysine residues are methylated.

Forms part of the ribosomal stalk which helps the ribosome interact with GTP-bound translation factors. This chain is Large ribosomal subunit protein uL11, found in Chlamydia trachomatis serovar L2 (strain ATCC VR-902B / DSM 19102 / 434/Bu).